The chain runs to 265 residues: Hydroxyethylthiazole kinase (265 aa).

M43 contributes to the substrate binding site. Residues R119 and S165 each coordinate ATP. A192 lines the substrate pocket.

The protein belongs to the Thz kinase family. The cofactor is Mg(2+).

The catalysed reaction is 5-(2-hydroxyethyl)-4-methylthiazole + ATP = 4-methyl-5-(2-phosphooxyethyl)-thiazole + ADP + H(+). Its pathway is cofactor biosynthesis; thiamine diphosphate biosynthesis; 4-methyl-5-(2-phosphoethyl)-thiazole from 5-(2-hydroxyethyl)-4-methylthiazole: step 1/1. Its function is as follows. Catalyzes the phosphorylation of the hydroxyl group of 4-methyl-5-beta-hydroxyethylthiazole (THZ). This is Hydroxyethylthiazole kinase from Haemophilus influenzae (strain ATCC 51907 / DSM 11121 / KW20 / Rd).